A 189-amino-acid chain; its full sequence is Elongation factor P (189 aa).

It belongs to the elongation factor P family.

Its subcellular location is the cytoplasm. The protein operates within protein biosynthesis; polypeptide chain elongation. Involved in peptide bond synthesis. Stimulates efficient translation and peptide-bond synthesis on native or reconstituted 70S ribosomes in vitro. Probably functions indirectly by altering the affinity of the ribosome for aminoacyl-tRNA, thus increasing their reactivity as acceptors for peptidyl transferase. This Rhizobium johnstonii (strain DSM 114642 / LMG 32736 / 3841) (Rhizobium leguminosarum bv. viciae) protein is Elongation factor P.